The sequence spans 162 residues: Phosphopantetheine adenylyltransferase (162 aa).

Position 9 (threonine 9) interacts with substrate. Residues 9-10 (TF) and histidine 17 contribute to the ATP site. Residues lysine 41, leucine 77, and arginine 91 each coordinate substrate. ATP contacts are provided by residues 92-94 (GLR), glutamate 102, and 127-133 (RQAIASK).

It belongs to the bacterial CoaD family. In terms of assembly, homohexamer. Requires Mg(2+) as cofactor.

It is found in the cytoplasm. The enzyme catalyses (R)-4'-phosphopantetheine + ATP + H(+) = 3'-dephospho-CoA + diphosphate. The protein operates within cofactor biosynthesis; coenzyme A biosynthesis; CoA from (R)-pantothenate: step 4/5. Functionally, reversibly transfers an adenylyl group from ATP to 4'-phosphopantetheine, yielding dephospho-CoA (dPCoA) and pyrophosphate. The chain is Phosphopantetheine adenylyltransferase from Cereibacter sphaeroides (strain ATCC 17029 / ATH 2.4.9) (Rhodobacter sphaeroides).